The primary structure comprises 249 residues: MWVGVISLFPEMFRSVTDFGVTSQAIKKGLLSIETWNPRDFTQDKHRTVDDRPYGGGPGMLMMVQPLRDAITAAREAAPGKTKVIYLSPQGRTLNQAGVEELATNENLVLICGRYEGVDERIIQSEVDEEWSIGDFVLTGGELPAMTLIDSVSRFVPGVLGDFASAEEDSFADGLLDCPHYTRPEVLDGKEVPSVLKSGNHKDIARWRMKQSLGRTWLRRPELLGNLALTDEQELLLAEFVREEHQQSK.

Residues glycine 113 and 133 to 138 each bind S-adenosyl-L-methionine; that span reads IGDFVL.

Belongs to the RNA methyltransferase TrmD family. In terms of assembly, homodimer.

The protein localises to the cytoplasm. The enzyme catalyses guanosine(37) in tRNA + S-adenosyl-L-methionine = N(1)-methylguanosine(37) in tRNA + S-adenosyl-L-homocysteine + H(+). Specifically methylates guanosine-37 in various tRNAs. The polypeptide is tRNA (guanine-N(1)-)-methyltransferase (Aliivibrio salmonicida (strain LFI1238) (Vibrio salmonicida (strain LFI1238))).